Consider the following 258-residue polypeptide: Acetylglutamate kinase (258 aa).

Substrate-binding positions include 44 to 45 (GG), Arg-66, and Asn-158. ATP-binding positions include 181 to 186 (DISSIL) and 209 to 211 (IIT).

Belongs to the acetylglutamate kinase family. ArgB subfamily. As to quaternary structure, homodimer.

The protein localises to the cytoplasm. The catalysed reaction is N-acetyl-L-glutamate + ATP = N-acetyl-L-glutamyl 5-phosphate + ADP. It participates in amino-acid biosynthesis; L-arginine biosynthesis; N(2)-acetyl-L-ornithine from L-glutamate: step 2/4. Catalyzes the ATP-dependent phosphorylation of N-acetyl-L-glutamate. The sequence is that of Acetylglutamate kinase from Buchnera aphidicola subsp. Schizaphis graminum (strain Sg).